We begin with the raw amino-acid sequence, 130 residues long: Riboflavin kinase (130 aa).

12–17 (GLGVGA) is a CDP binding site. Residues Thr-39 and Asn-41 each contribute to the Mg(2+) site. FMN contacts are provided by Thr-90 and Glu-98. 103–106 (KNLR) is a CDP binding site.

Belongs to the archaeal riboflavin kinase family. The cofactor is Mg(2+).

The catalysed reaction is riboflavin + CTP = CDP + FMN + H(+). The protein operates within cofactor biosynthesis; FMN biosynthesis; FMN from riboflavin (CTP route): step 1/1. In terms of biological role, catalyzes the CTP-dependent phosphorylation of riboflavin (vitamin B2) to form flavin mononucleotide (FMN). The chain is Riboflavin kinase from Staphylothermus marinus (strain ATCC 43588 / DSM 3639 / JCM 9404 / F1).